The primary structure comprises 230 residues: Secretory carrier-associated membrane protein 4 (230 aa).

Residues 1-39 are Cytoplasmic-facing; sequence MSGKENNFPPLPKFIPLKPCFYQNFSDEIPIEHQVLVKR. Transmembrane regions (helical) follow at residues 40–60, 61–81, 105–125, and 149–169; these read IYRL…ACLA, WWIA…LLLF, FMAF…QAVG, and VVML…AVMI. Topologically, residues 170–230 are cytoplasmic; the sequence is MKVHSIYRGT…SYPASGGQWP (61 aa). Residue T194 is modified to Phosphothreonine. The tract at residues 208–230 is disordered; sequence FSGNSLPEYPTVPSYPASGGQWP.

This sequence belongs to the SCAMP family.

The protein localises to the membrane. Functionally, probably involved in membrane protein trafficking. The chain is Secretory carrier-associated membrane protein 4 (SCAMP4) from Bos taurus (Bovine).